A 490-amino-acid polypeptide reads, in one-letter code: Betaine aldehyde dehydrogenase (490 aa).

K(+) contacts are provided by threonine 26, isoleucine 27, and aspartate 93. Position 150–152 (150–152) interacts with NAD(+); that stretch reads GAW. Lysine 162 functions as the Charge relay system in the catalytic mechanism. 176–179 provides a ligand contact to NAD(+); it reads KPSE. Valine 180 provides a ligand contact to K(+). 230–233 lines the NAD(+) pocket; sequence GVAS. Residue leucine 246 participates in K(+) binding. Residue glutamate 252 is the Proton acceptor of the active site. Glycine 254, cysteine 286, and glutamate 387 together coordinate NAD(+). The active-site Nucleophile is the cysteine 286. Cysteine 286 bears the Cysteine sulfenic acid (-SOH) mark. Residues lysine 457 and glycine 460 each coordinate K(+). Glutamate 464 (charge relay system) is an active-site residue.

The protein belongs to the aldehyde dehydrogenase family. In terms of assembly, dimer of dimers. K(+) serves as cofactor.

It carries out the reaction betaine aldehyde + NAD(+) + H2O = glycine betaine + NADH + 2 H(+). It participates in amine and polyamine biosynthesis; betaine biosynthesis via choline pathway; betaine from betaine aldehyde: step 1/1. In terms of biological role, involved in the biosynthesis of the osmoprotectant glycine betaine. Catalyzes the irreversible oxidation of betaine aldehyde to the corresponding acid. The protein is Betaine aldehyde dehydrogenase of Escherichia coli O139:H28 (strain E24377A / ETEC).